The sequence spans 288 residues: MKLPIFIADAFTTKAFRGNPAAVCLLENKLDEDLHQKIAKEMNLSETAFIRKLHPNDNFTQSSCFGLRWFTPQNEVPLCGHATLASAAVLFHKIKNVHSTLTFVTMSGELKARKEEDGIVLDLPLYPAHPQKLHEVEDLIKTAIGDTLVQDVRYSPDTKKLLVRLSDTYNRSFLESLTVNTENLLQVETTGKVKGLILTLKGEPGGQTQAFDFYSRYFAPWYGVAEDPVTGSAHTVLSSYWSEQLGKKDLHAFQCSNRGGELTISLRSDGRVDIKGGAALVLEGTLTA.

Residue Glu-46 is part of the active site.

This sequence belongs to the PhzF family. In terms of assembly, interacts with UNRIP/MAWD.

The sequence is that of Phenazine biosynthesis-like domain-containing protein (PBLD) from Bos taurus (Bovine).